Reading from the N-terminus, the 606-residue chain is Aspartate--tRNA(Asp/Asn) ligase (606 aa).

Glu175 serves as a coordination point for L-aspartate. The aspartate stretch occupies residues 199-202 (QLFK). Arg221 contributes to the L-aspartate binding site. Residues 221 to 223 (RDE) and Gln230 contribute to the ATP site. His453 lines the L-aspartate pocket. Glu487 contributes to the ATP binding site. Arg494 provides a ligand contact to L-aspartate. ATP is bound at residue 539–542 (GWDR). The disordered stretch occupies residues 564 to 606 (GGVDPLTDAPGTIPAEQRKETGVDFKPEKAAKAAQGEKAGKES). Residues 579–594 (EQRKETGVDFKPEKAA) are compositionally biased toward basic and acidic residues.

Belongs to the class-II aminoacyl-tRNA synthetase family. Type 1 subfamily. As to quaternary structure, homodimer.

The protein resides in the cytoplasm. The catalysed reaction is tRNA(Asx) + L-aspartate + ATP = L-aspartyl-tRNA(Asx) + AMP + diphosphate. In terms of biological role, aspartyl-tRNA synthetase with relaxed tRNA specificity since it is able to aspartylate not only its cognate tRNA(Asp) but also tRNA(Asn). Reaction proceeds in two steps: L-aspartate is first activated by ATP to form Asp-AMP and then transferred to the acceptor end of tRNA(Asp/Asn). The sequence is that of Aspartate--tRNA(Asp/Asn) ligase from Corynebacterium aurimucosum (strain ATCC 700975 / DSM 44827 / CIP 107346 / CN-1) (Corynebacterium nigricans).